We begin with the raw amino-acid sequence, 507 residues long: Hippocampus abundant transcript-like protein 1 (507 aa).

Residues 1 to 27 (MSTDGESPEEPRWKAVASPKASTMPEK) form a disordered region. Residues 1-51 (MSTDGESPEEPRWKAVASPKASTMPEKRGSAQAASGSWLQGFGHPSVYHAA) lie on the Extracellular side of the membrane. Residues 52–72 (FVIFLEFFAWGLLTTPMLTVL) form a helical membrane-spanning segment. Topologically, residues 73 to 84 (HETFPQHTFLMN) are cytoplasmic. Residues 85 to 105 (GLIQGVKGLLSFLSAPLIGAL) form a helical membrane-spanning segment. Over 106–113 (SDVWGRKP) the chain is Extracellular. Residues 114 to 134 (FLLGTVFFTCFPIPLMRINPW) traverse the membrane as a helical segment. Over 135–136 (WY) the chain is Cytoplasmic. A helical membrane pass occupies residues 137–157 (FGMISVSGVFSVTFSVIFAYV). Residues 158-170 (ADFTQEHERSTAY) lie on the Extracellular side of the membrane. The chain crosses the membrane as a helical span at residues 171–191 (GWVSATFAASLVSSPAIGTYL). Over 192 to 198 (SANYGDS) the chain is Cytoplasmic. A helical membrane pass occupies residues 199 to 219 (LVVLVATLVALLDICFILIAV). The Extracellular segment spans residues 220 to 257 (PESLSEKIRPASWGAQISWKQADPFASLKKVGKDSTVL). The chain crosses the membrane as a helical span at residues 258 to 278 (LICITVFLSYLPEAGQYSSFF). The Cytoplasmic segment spans residues 279–283 (LYLRQ). Residues 284-304 (VIGFGSVKIVAFIAMVGILSI) traverse the membrane as a helical segment. Residues 305–323 (VAQTVFLSKLMRSLGNKNT) are Extracellular-facing. The chain crosses the membrane as a helical span at residues 324-344 (VLLGLGFQMLQLAWYGFGSQA). Residues 345 to 347 (WMM) lie on the Cytoplasmic side of the membrane. A helical transmembrane segment spans residues 348 to 368 (WAAGTVAAMSSITFPAVSALI). Topologically, residues 369–389 (SRNAESDQQGVAQGIVTGIRG) are extracellular. The chain crosses the membrane as a helical span at residues 390 to 410 (LCNGLGPALYGFIFYMFHVEL). The Cytoplasmic portion of the chain corresponds to 411 to 430 (SELGPKLNSDDDPLQGAFIP). A helical membrane pass occupies residues 431–451 (GPPFLFGACIVLMSFLVALFI). The Extracellular segment spans residues 452-507 (PEYRKTSGVQKHNNSTSGSLSTPPERGSDEDIEPLLQDSSIWELSFEEPGNQCTEL). Residues 459–473 (GVQKHNNSTSGSLST) are compositionally biased toward polar residues. The disordered stretch occupies residues 459–483 (GVQKHNNSTSGSLSTPPERGSDEDI). Residues Asn-464 and Asn-465 are each glycosylated (N-linked (GlcNAc...) asparagine).

It belongs to the major facilitator superfamily.

It localises to the membrane. The protein is Hippocampus abundant transcript-like protein 1 of Mus musculus (Mouse).